A 117-amino-acid chain; its full sequence is Putative phosphotransferase enzyme IIB component MG129 (117 aa).

The chain crosses the membrane as a helical span at residues 1-21 (MKWLLWLGYIFSFGLLYLWIV). Residues 42 to 117 (PFKVKDFVSA…ELKKKIEDEQ (76 aa)) enclose the PTS EIIB type-1 domain.

Its subcellular location is the membrane. The phosphoenolpyruvate-dependent sugar phosphotransferase system (PTS), a major carbohydrate active -transport system, catalyzes the phosphorylation of incoming sugar substrates concomitant with their translocation across the cell membrane. In Mycoplasma genitalium (strain ATCC 33530 / DSM 19775 / NCTC 10195 / G37) (Mycoplasmoides genitalium), this protein is Putative phosphotransferase enzyme IIB component MG129.